A 139-amino-acid chain; its full sequence is Small ribosomal subunit protein uS11 (139 aa).

A disordered region spans residues 117-139 (VEDVTPIPHDGTRPKGGRRGRRV).

It belongs to the universal ribosomal protein uS11 family. In terms of assembly, part of the 30S ribosomal subunit.

Its function is as follows. Located on the platform of the 30S subunit. The protein is Small ribosomal subunit protein uS11 of Thermococcus onnurineus (strain NA1).